Reading from the N-terminus, the 345-residue chain is NADH-quinone oxidoreductase subunit H (345 aa).

Transmembrane regions (helical) follow at residues 13-33 (VLIL…LLFL), 84-104 (FMLA…VIPF), 115-135 (VAIL…IMGG), 161-181 (LGLI…GGIV), 190-210 (FFSW…ISCL), 248-268 (YIAI…GWLS), 277-297 (VFWM…VKAI), and 309-329 (LGWK…AFAA).

Belongs to the complex I subunit 1 family. In terms of assembly, NDH-1 is composed of 14 different subunits. Subunits NuoA, H, J, K, L, M, N constitute the membrane sector of the complex.

The protein resides in the cell inner membrane. It catalyses the reaction a quinone + NADH + 5 H(+)(in) = a quinol + NAD(+) + 4 H(+)(out). Its function is as follows. NDH-1 shuttles electrons from NADH, via FMN and iron-sulfur (Fe-S) centers, to quinones in the respiratory chain. The immediate electron acceptor for the enzyme in this species is believed to be ubiquinone. Couples the redox reaction to proton translocation (for every two electrons transferred, four hydrogen ions are translocated across the cytoplasmic membrane), and thus conserves the redox energy in a proton gradient. This subunit may bind ubiquinone. The protein is NADH-quinone oxidoreductase subunit H of Roseobacter denitrificans (strain ATCC 33942 / OCh 114) (Erythrobacter sp. (strain OCh 114)).